We begin with the raw amino-acid sequence, 369 residues long: 3 beta-hydroxysteroid dehydrogenase type 7 (369 aa).

Y159 acts as the Proton acceptor in catalysis. K163 lines the NAD(+) pocket. 2 helical membrane-spanning segments follow: residues 289-309 (LLPY…QWLL) and 311-331 (PLVL…NTTF).

It belongs to the 3-beta-HSD family.

The protein localises to the endoplasmic reticulum membrane. The enzyme catalyses 7alpha-hydroxycholesterol + NAD(+) = 7alpha-hydroxycholest-4-en-3-one + NADH + H(+). The catalysed reaction is 7alpha,25-dihydroxycholesterol + NAD(+) = 7alpha,25-dihydroxy-4-cholesten-3-one + NADH + H(+). It catalyses the reaction (25R)-cholest-5-en-3beta,7alpha,26-triol + NAD(+) = (25R)-7alpha,26-dihydroxycholest-4-en-3-one + NADH + H(+). It carries out the reaction (24S)-7alpha-dihydroxycholesterol + NAD(+) = (24S)-7alpha,24-dihydroxycholest-4-en-3-one + NADH + H(+). It functions in the pathway lipid metabolism; steroid biosynthesis. The 3-beta-HSD enzymatic system plays a crucial role in the biosynthesis of all classes of hormonal steroids. HSD VII is active against four 7-alpha-hydroxylated sterols. Does not metabolize several different C(19/21) steroids as substrates. Involved in bile acid synthesis. Plays a key role in cell positioning and movement in lymphoid tissues by mediating degradation of 7-alpha,25-dihydroxycholesterol (7-alpha,25-OHC): 7-alpha,25-OHC acts as a ligand for the G protein-coupled receptor GPR183/EBI2, a chemotactic receptor for a number of lymphoid cells. This is 3 beta-hydroxysteroid dehydrogenase type 7 from Homo sapiens (Human).